Here is a 453-residue protein sequence, read N- to C-terminus: Bifunctional protein GlmU (453 aa).

The interval 1–227 (MNKLSVVILA…LMEVEGVNNR (227 aa)) is pyrophosphorylase. Residues 9–12 (LAAG), Lys-23, Gln-74, 79–80 (GT), 101–103 (YGD), Gly-138, Glu-152, Asn-167, and Asn-225 each bind UDP-N-acetyl-alpha-D-glucosamine. Residue Asp-103 participates in Mg(2+) binding. Asn-225 serves as a coordination point for Mg(2+). The interval 228-248 (LQLANLERHYQRKQVEKLLLA) is linker. Residues 249-453 (GVTFADPARF…ISNWQRPKRK (205 aa)) are N-acetyltransferase. Residues Arg-331 and Lys-349 each contribute to the UDP-N-acetyl-alpha-D-glucosamine site. The Proton acceptor role is filled by His-361. UDP-N-acetyl-alpha-D-glucosamine-binding residues include Tyr-364 and Asn-375. Residues Ala-378, 384–385 (NY), Ser-403, Ala-421, and Arg-438 each bind acetyl-CoA.

It in the N-terminal section; belongs to the N-acetylglucosamine-1-phosphate uridyltransferase family. In the C-terminal section; belongs to the transferase hexapeptide repeat family. As to quaternary structure, homotrimer. Requires Mg(2+) as cofactor.

It is found in the cytoplasm. The catalysed reaction is alpha-D-glucosamine 1-phosphate + acetyl-CoA = N-acetyl-alpha-D-glucosamine 1-phosphate + CoA + H(+). It carries out the reaction N-acetyl-alpha-D-glucosamine 1-phosphate + UTP + H(+) = UDP-N-acetyl-alpha-D-glucosamine + diphosphate. Its pathway is nucleotide-sugar biosynthesis; UDP-N-acetyl-alpha-D-glucosamine biosynthesis; N-acetyl-alpha-D-glucosamine 1-phosphate from alpha-D-glucosamine 6-phosphate (route II): step 2/2. The protein operates within nucleotide-sugar biosynthesis; UDP-N-acetyl-alpha-D-glucosamine biosynthesis; UDP-N-acetyl-alpha-D-glucosamine from N-acetyl-alpha-D-glucosamine 1-phosphate: step 1/1. It functions in the pathway bacterial outer membrane biogenesis; LPS lipid A biosynthesis. Functionally, catalyzes the last two sequential reactions in the de novo biosynthetic pathway for UDP-N-acetylglucosamine (UDP-GlcNAc). The C-terminal domain catalyzes the transfer of acetyl group from acetyl coenzyme A to glucosamine-1-phosphate (GlcN-1-P) to produce N-acetylglucosamine-1-phosphate (GlcNAc-1-P), which is converted into UDP-GlcNAc by the transfer of uridine 5-monophosphate (from uridine 5-triphosphate), a reaction catalyzed by the N-terminal domain. The chain is Bifunctional protein GlmU from Histophilus somni (strain 2336) (Haemophilus somnus).